A 463-amino-acid chain; its full sequence is Probable Xaa-Pro aminopeptidase pepP (463 aa).

Residues aspartate 259, aspartate 270, glutamate 393, and glutamate 433 each contribute to the Mn(2+) site.

It belongs to the peptidase M24B family. The cofactor is Mn(2+).

It catalyses the reaction Release of any N-terminal amino acid, including proline, that is linked to proline, even from a dipeptide or tripeptide.. Its function is as follows. Catalyzes the removal of a penultimate prolyl residue from the N-termini of peptides. The protein is Probable Xaa-Pro aminopeptidase pepP (pepP) of Pyrenophora teres f. teres (strain 0-1) (Barley net blotch fungus).